A 274-amino-acid chain; its full sequence is Orotidine 5'-phosphate decarboxylase (274 aa).

Residues Asp40, 62 to 64 (KTH), 93 to 102 (DRKFIDIGNT), Tyr227, and Arg245 contribute to the substrate site. Lys95 acts as the Proton donor in catalysis.

Belongs to the OMP decarboxylase family.

The enzyme catalyses orotidine 5'-phosphate + H(+) = UMP + CO2. It functions in the pathway pyrimidine metabolism; UMP biosynthesis via de novo pathway; UMP from orotate: step 2/2. This is Orotidine 5'-phosphate decarboxylase (pyrG) from Emericella nidulans (strain FGSC A4 / ATCC 38163 / CBS 112.46 / NRRL 194 / M139) (Aspergillus nidulans).